A 57-amino-acid chain; its full sequence is uncharacterized protein (57 aa).

The chain crosses the membrane as a helical span at residues 21 to 37 (GTYTLVVAFVLAFLVYS).

The protein localises to the host membrane. This is an uncharacterized protein from Human herpesvirus 6B (strain Z29) (HHV-6 variant B).